The following is a 463-amino-acid chain: tRNA-2-methylthio-N(6)-dimethylallyladenosine synthase (463 aa).

An MTTase N-terminal domain is found at R5–Q125. [4Fe-4S] cluster is bound by residues C14, C50, C88, C166, C170, and C173. Residues R152 to A384 form the Radical SAM core domain. The TRAM domain occupies K387 to S449.

This sequence belongs to the methylthiotransferase family. MiaB subfamily. In terms of assembly, monomer. Requires [4Fe-4S] cluster as cofactor.

The protein localises to the cytoplasm. It catalyses the reaction N(6)-dimethylallyladenosine(37) in tRNA + (sulfur carrier)-SH + AH2 + 2 S-adenosyl-L-methionine = 2-methylsulfanyl-N(6)-dimethylallyladenosine(37) in tRNA + (sulfur carrier)-H + 5'-deoxyadenosine + L-methionine + A + S-adenosyl-L-homocysteine + 2 H(+). Catalyzes the methylthiolation of N6-(dimethylallyl)adenosine (i(6)A), leading to the formation of 2-methylthio-N6-(dimethylallyl)adenosine (ms(2)i(6)A) at position 37 in tRNAs that read codons beginning with uridine. In Rhodopseudomonas palustris (strain ATCC BAA-98 / CGA009), this protein is tRNA-2-methylthio-N(6)-dimethylallyladenosine synthase.